The following is a 178-amino-acid chain: MADGKAGEEKPEKPQRAGAAGGPEEEAEKPVKTKTVSSSNGGENSSRSAEKRSAEDETADLPTKPTKISKFGFAIGSQTTKKASAISIKLGSSKPKEPVPTLAPKTLSVAAAFNEDEDSEPEEMPPEAKMRMKNIGRDTPTSAGPNSFNKGKHGFSDNQKLWERNIKSHLGNVHDQDN.

Basic and acidic residues predominate over residues 1–15 (MADGKAGEEKPEKPQ). The tract at residues 1 to 84 (MADGKAGEEK…IGSQTTKKAS (84 aa)) is disordered. At A2 the chain carries N-acetylalanine. Low complexity predominate over residues 37-47 (SSSNGGENSSR). A Phosphoserine modification is found at S53. Position 64 is an N6-acetyllysine (K64). Phosphoserine occurs at positions 77, 87, and 119. The segment at 134–178 (NIGRDTPTSAGPNSFNKGKHGFSDNQKLWERNIKSHLGNVHDQDN) is disordered. T139 carries the post-translational modification Phosphothreonine. Over residues 139 to 149 (TPTSAGPNSFN) the composition is skewed to polar residues. S147 carries the phosphoserine modification. An N6-acetyllysine mark is found at K150 and K152. The segment covering 160 to 178 (KLWERNIKSHLGNVHDQDN) has biased composition (basic and acidic residues).

As to quaternary structure, interacts with UHRF2/NIRF. Post-translationally, ubiquitinated; mediated by UHRF2 and leading to its subsequent proteasomal degradation. N-terminally acetylated in a HYPK-dependent manner by the NatA acetyltransferase complex which is composed of NAA10 and NAA15.

The protein resides in the nucleus. In terms of biological role, may be involved in cell cycle regulation. In Bos taurus (Bovine), this protein is PEST proteolytic signal-containing nuclear protein (PCNP).